Reading from the N-terminus, the 122-residue chain is Large ribosomal subunit protein uL14 (122 aa).

It belongs to the universal ribosomal protein uL14 family. Part of the 50S ribosomal subunit. Forms a cluster with proteins L3 and L19. In the 70S ribosome, L14 and L19 interact and together make contacts with the 16S rRNA in bridges B5 and B8.

Its function is as follows. Binds to 23S rRNA. Forms part of two intersubunit bridges in the 70S ribosome. The polypeptide is Large ribosomal subunit protein uL14 (Picosynechococcus sp. (strain ATCC 27264 / PCC 7002 / PR-6) (Agmenellum quadruplicatum)).